Consider the following 144-residue polypeptide: Transcriptional regulator SlyA (144 aa).

The HTH marR-type domain maps to 2-135; that stretch reads ESPLGSDLSR…LSQMISKLEK (134 aa). A DNA-binding region (H-T-H motif) is located at residues 49–72; it reads QIQLAKAIGIEQPSLVRTLDQLEE.

Belongs to the SlyA family. As to quaternary structure, homodimer.

Functionally, transcription regulator that can specifically activate or repress expression of target genes. This is Transcriptional regulator SlyA from Wigglesworthia glossinidia brevipalpis.